Reading from the N-terminus, the 344-residue chain is Oxygen sensor histidine kinase NreB (344 aa).

Residues Cys58, Cys61, Cys73, and Cys76 each coordinate [4Fe-4S] cluster. The 198-residue stretch at Glu147–Ile344 folds into the Histidine kinase domain. The residue at position 158 (His158) is a Phosphohistidine; by autocatalysis.

It depends on [4Fe-4S] cluster as a cofactor. Autophosphorylated.

It localises to the cytoplasm. It catalyses the reaction ATP + protein L-histidine = ADP + protein N-phospho-L-histidine.. Its function is as follows. Member of the two-component regulatory system NreB/NreC involved in the control of dissimilatory nitrate/nitrite reduction in response to oxygen. NreB functions as a direct oxygen sensor histidine kinase which is autophosphorylated, in the absence of oxygen, probably at the conserved histidine residue, and transfers its phosphate group probably to a conserved aspartate residue of NreC. NreB/NreC activates the expression of the nitrate (narGHJI) and nitrite (nir) reductase operons, as well as the putative nitrate transporter gene narT. This chain is Oxygen sensor histidine kinase NreB (nreB), found in Staphylococcus epidermidis (strain ATCC 35984 / DSM 28319 / BCRC 17069 / CCUG 31568 / BM 3577 / RP62A).